A 134-amino-acid polypeptide reads, in one-letter code: Large ribosomal subunit protein eL32 (134 aa).

This sequence belongs to the eukaryotic ribosomal protein eL32 family.

The chain is Large ribosomal subunit protein eL32 (RpL32) from Drosophila bifasciata (Fruit fly).